The sequence spans 689 residues: Glycine--tRNA ligase beta subunit (689 aa).

This sequence belongs to the class-II aminoacyl-tRNA synthetase family. Tetramer of two alpha and two beta subunits.

The protein resides in the cytoplasm. It carries out the reaction tRNA(Gly) + glycine + ATP = glycyl-tRNA(Gly) + AMP + diphosphate. The chain is Glycine--tRNA ligase beta subunit from Aeromonas salmonicida (strain A449).